The chain runs to 319 residues: MATH domain and coiled-coil domain-containing protein At3g58200 (319 aa).

In terms of domain architecture, MATH spans 6-132 (DNKFRWVIKN…NEEVKIVVEV (127 aa)). The stretch at 255–302 (FKVDWLEKKLEEVKEKKKEEQIGETRMQEMKVFKQKCSDIEALMEREK) forms a coiled coil.

The protein is MATH domain and coiled-coil domain-containing protein At3g58200 of Arabidopsis thaliana (Mouse-ear cress).